Reading from the N-terminus, the 115-residue chain is U3-lycotoxin-Ls1p (115 aa).

An N-terminal signal peptide occupies residues 1 to 20 (MKFVLLFGVLLVTLFSYSSA). Residues 21–44 (EMFDDFDQADEDELLSLIEKEEAR) constitute a propeptide that is removed on maturation. Cystine bridges form between Cys-48-Cys-63, Cys-55-Cys-72, Cys-62-Cys-87, and Cys-74-Cys-85.

It belongs to the neurotoxin 19 (CSTX) family. 01 subfamily. Expressed by the venom gland.

It is found in the secreted. This chain is U3-lycotoxin-Ls1p, found in Lycosa singoriensis (Wolf spider).